The chain runs to 315 residues: Homoserine kinase (315 aa).

97-107 (PPARGLGSSAT) serves as a coordination point for ATP.

The protein belongs to the GHMP kinase family. Homoserine kinase subfamily.

It localises to the cytoplasm. The enzyme catalyses L-homoserine + ATP = O-phospho-L-homoserine + ADP + H(+). It functions in the pathway amino-acid biosynthesis; L-threonine biosynthesis; L-threonine from L-aspartate: step 4/5. Functionally, catalyzes the ATP-dependent phosphorylation of L-homoserine to L-homoserine phosphate. The polypeptide is Homoserine kinase (Prochlorococcus marinus (strain MIT 9312)).